The primary structure comprises 243 residues: 1-(5-phosphoribosyl)-5-[(5-phosphoribosylamino)methylideneamino] imidazole-4-carboxamide isomerase (243 aa).

The active-site Proton acceptor is Asp10. The active-site Proton donor is the Asp131.

It belongs to the HisA/HisF family.

It localises to the cytoplasm. The enzyme catalyses 1-(5-phospho-beta-D-ribosyl)-5-[(5-phospho-beta-D-ribosylamino)methylideneamino]imidazole-4-carboxamide = 5-[(5-phospho-1-deoxy-D-ribulos-1-ylimino)methylamino]-1-(5-phospho-beta-D-ribosyl)imidazole-4-carboxamide. It functions in the pathway amino-acid biosynthesis; L-histidine biosynthesis; L-histidine from 5-phospho-alpha-D-ribose 1-diphosphate: step 4/9. The polypeptide is 1-(5-phosphoribosyl)-5-[(5-phosphoribosylamino)methylideneamino] imidazole-4-carboxamide isomerase (Rhizorhabdus wittichii (strain DSM 6014 / CCUG 31198 / JCM 15750 / NBRC 105917 / EY 4224 / RW1) (Sphingomonas wittichii)).